A 218-amino-acid chain; its full sequence is Cytochrome b6 (218 aa).

The helical transmembrane segment at 35–55 (IFYCLGGITLVCFLIQFATGF) threads the bilayer. Cys-38 is a heme c binding site. Heme b is bound by residues His-89 and His-103. The next 3 membrane-spanning stretches (helical) occupy residues 93–113 (ASMM…TGGF), 119–139 (LTWV…VTGY), and 189–209 (LHTF…FLMI). Residues His-190 and His-205 each coordinate heme b.

This sequence belongs to the cytochrome b family. PetB subfamily. The 4 large subunits of the cytochrome b6-f complex are cytochrome b6, subunit IV (17 kDa polypeptide, PetD), cytochrome f and the Rieske protein, while the 4 small subunits are PetG, PetL, PetM and PetN. The complex functions as a dimer. The cofactor is heme b. Heme c is required as a cofactor.

It localises to the cellular thylakoid membrane. In terms of biological role, component of the cytochrome b6-f complex, which mediates electron transfer between photosystem II (PSII) and photosystem I (PSI), cyclic electron flow around PSI, and state transitions. This chain is Cytochrome b6, found in Synechococcus sp. (strain RCC307).